We begin with the raw amino-acid sequence, 410 residues long: Beta-arrestin-1 (410 aa).

An interaction with SRC region spans residues 1 to 163; that stretch reads MGDKGTRVFK…LEEKIHKRNS (163 aa). The tract at residues 45–86 is interaction with CHRM2; the sequence is PEYLKERRVYVTLTCAFRYGREDLDVLGLTFRKDLFVANVQS. A Phosphotyrosine modification is found at Tyr47. Lys250, Met255, Lys324, and Lys326 together coordinate 1D-myo-inositol hexakisphosphate. The segment at 318 to 410 is interaction with TRAF6; that stretch reads IVSYKVKVKL…GTGSPQLNNR (93 aa). Residues 385–395 carry the [DE]-X(1,2)-F-X-X-[FL]-X-X-X-R motif motif; the sequence is RQRLKGMKDDK. The disordered stretch occupies residues 389–410; the sequence is KGMKDDKEEEENGTGSPQLNNR. Residues 401 to 410 show a composition bias toward polar residues; it reads GTGSPQLNNR. Residue Ser404 is modified to Phosphoserine; by GRK5.

The protein belongs to the arrestin family. In terms of assembly, monomer. Homodimer. Homooligomer; the self-association is mediated by InsP6-binding. Heterooligomer with ARRB2; the association is mediated by InsP6-binding. Interacts with ADRB2 (phosphorylated). Interacts with CHRM2 (phosphorylated). Interacts with LHCGR. Interacts with CYTH2 and CASR. Interacts with AP2B1 (dephosphorylated); phosphorylation of AP2B1 disrupts the interaction. Interacts (dephosphorylated at Ser-404) with CLTC. Interacts with CCR2 and GRK2. Interacts with CRR5. Interacts with PTAFR (phosphorylated on serine residues). Interacts with CLTC and MAP2K3. Interacts with CREB1. Interacts with TRAF6. Interacts with IGF1R and MDM2. Interacts with C5AR1. Interacts with PDE4D. Interacts with SRC (via the SH3 domain and the protein kinase domain); the interaction is independent of the phosphorylation state of SRC C-terminus. Interacts with TACR1. Interacts with RAF1. Interacts with CHUK, IKBKB and MAP3K14. Interacts with DVL1; the interaction is enhanced by phosphorylation of DVL1. Interacts with DVL2; the interaction is enhanced by phosphorylation of DVL2. Interacts with IGF1R. Associates with MAP kinase p38. Part of a MAPK signaling complex consisting of TACR1, ARRB1, SRC, MAPK1 (activated) and MAPK3 (activated). Part of a MAPK signaling complex consisting of F2RL1, ARRB1, RAF1, MAPK1 (activated) and MAPK3 (activated). Interacts with GPR143. Interacts with MAP2K4/MKK4. Interacts with HCK and CXCR1 (phosphorylated). Interacts with ACKR3 and ACKR4. Interacts with ARRDC1; the interaction is direct. Interacts with GPR61, GPR62 and GPR135. Post-translationally, constitutively phosphorylated at in the cytoplasm. At the plasma membrane, is rapidly dephosphorylated, a process that is required for clathrin binding and ADRB2 endocytosis but not for ADRB2 binding and desensitization. Once internalized, is rephosphorylated. The ubiquitination status appears to regulate the formation and trafficking of beta-arrestin-GPCR complexes and signaling. Ubiquitination appears to occur GPCR-specific. Ubiquitinated by MDM2; the ubiquitination is required for rapid internalization of ADRB2. Deubiquitinated by USP33; the deubiquitination leads to a dissociation of the beta-arrestin-GPCR complex. Stimulation of a class A GPCR, such as ADRB2, induces transient ubiquitination and subsequently promotes association with USP33.

It localises to the cytoplasm. The protein resides in the nucleus. Its subcellular location is the cell membrane. It is found in the membrane. The protein localises to the clathrin-coated pit. It localises to the cell projection. The protein resides in the pseudopodium. Its subcellular location is the cytoplasmic vesicle. Functions in regulating agonist-mediated G-protein coupled receptor (GPCR) signaling by mediating both receptor desensitization and resensitization processes. During homologous desensitization, beta-arrestins bind to the GPRK-phosphorylated receptor and sterically preclude its coupling to the cognate G-protein; the binding appears to require additional receptor determinants exposed only in the active receptor conformation. The beta-arrestins target many receptors for internalization by acting as endocytic adapters (CLASPs, clathrin-associated sorting proteins) and recruiting the GPRCs to the adapter protein 2 complex 2 (AP-2) in clathrin-coated pits (CCPs). However, the extent of beta-arrestin involvement appears to vary significantly depending on the receptor, agonist and cell type. Internalized arrestin-receptor complexes traffic to intracellular endosomes, where they remain uncoupled from G-proteins. Two different modes of arrestin-mediated internalization occur. Class A receptors, like ADRB2, OPRM1, ENDRA, D1AR and ADRA1B dissociate from beta-arrestin at or near the plasma membrane and undergo rapid recycling. Class B receptors, like AVPR2, AGTR1, NTSR1, TRHR and TACR1 internalize as a complex with arrestin and traffic with it to endosomal vesicles, presumably as desensitized receptors, for extended periods of time. Receptor resensitization then requires that receptor-bound arrestin is removed so that the receptor can be dephosphorylated and returned to the plasma membrane. Involved in internalization of P2RY4 and UTP-stimulated internalization of P2RY2. Involved in phosphorylation-dependent internalization of OPRD1 ands subsequent recycling. Involved in the degradation of cAMP by recruiting cAMP phosphodiesterases to ligand-activated receptors. Beta-arrestins function as multivalent adapter proteins that can switch the GPCR from a G-protein signaling mode that transmits short-lived signals from the plasma membrane via small molecule second messengers and ion channels to a beta-arrestin signaling mode that transmits a distinct set of signals that are initiated as the receptor internalizes and transits the intracellular compartment. Acts as a signaling scaffold for MAPK pathways such as MAPK1/3 (ERK1/2). ERK1/2 activated by the beta-arrestin scaffold is largely excluded from the nucleus and confined to cytoplasmic locations such as endocytic vesicles, also called beta-arrestin signalosomes. Recruits c-Src/SRC to ADRB2 resulting in ERK activation. GPCRs for which the beta-arrestin-mediated signaling relies on both ARRB1 and ARRB2 (codependent regulation) include ADRB2, F2RL1 and PTH1R. For some GPCRs the beta-arrestin-mediated signaling relies on either ARRB1 or ARRB2 and is inhibited by the other respective beta-arrestin form (reciprocal regulation). Inhibits ERK1/2 signaling in AGTR1- and AVPR2-mediated activation (reciprocal regulation). Is required for SP-stimulated endocytosis of NK1R and recruits c-Src/SRC to internalized NK1R resulting in ERK1/2 activation, which is required for the antiapoptotic effects of SP. Is involved in proteinase-activated F2RL1-mediated ERK activity. Acts as a signaling scaffold for the AKT1 pathway. Is involved in alpha-thrombin-stimulated AKT1 signaling. Is involved in IGF1-stimulated AKT1 signaling leading to increased protection from apoptosis. Involved in activation of the p38 MAPK signaling pathway and in actin bundle formation. Involved in F2RL1-mediated cytoskeletal rearrangement and chemotaxis. Involved in AGTR1-mediated stress fiber formation by acting together with GNAQ to activate RHOA. Appears to function as signaling scaffold involved in regulation of MIP-1-beta-stimulated CCR5-dependent chemotaxis. Involved in attenuation of NF-kappa-B-dependent transcription in response to GPCR or cytokine stimulation by interacting with and stabilizing CHUK. May serve as nuclear messenger for GPCRs. Involved in OPRD1-stimulated transcriptional regulation by translocating to CDKN1B and FOS promoter regions and recruiting EP300 resulting in acetylation of histone H4. Involved in regulation of LEF1 transcriptional activity via interaction with DVL1 and/or DVL2 Also involved in regulation of receptors other than GPCRs. Involved in Toll-like receptor and IL-1 receptor signaling through the interaction with TRAF6 which prevents TRAF6 autoubiquitination and oligomerization required for activation of NF-kappa-B and JUN. Involved in IL8-mediated granule release in neutrophils. Binds phosphoinositides. Binds inositolhexakisphosphate (InsP6). Required for atypical chemokine receptor ACKR2-induced RAC1-LIMK1-PAK1-dependent phosphorylation of cofilin (CFL1) and for the up-regulation of ACKR2 from endosomal compartment to cell membrane, increasing its efficiency in chemokine uptake and degradation. Involved in the internalization of the atypical chemokine receptor ACKR3. Negatively regulates the NOTCH signaling pathway by mediating the ubiquitination and degradation of NOTCH1 by ITCH. Participates in the recruitment of the ubiquitin-protein ligase to the receptor. The polypeptide is Beta-arrestin-1 (ARRB1) (Macaca fascicularis (Crab-eating macaque)).